A 231-amino-acid polypeptide reads, in one-letter code: Two-component response regulator ORR1 (231 aa).

The Response regulatory domain occupies 9-135 (RVLLVDDSPV…DVQRLRNCSP (127 aa)). Aspartate 68 carries the post-translational modification 4-aspartylphosphate.

It belongs to the ARR family. Type-A subfamily. In terms of processing, two-component system major event consists of a His-to-Asp phosphorelay between a sensor histidine kinase (HK) and a response regulator (RR). In plants, the His-to-Asp phosphorelay involves an additional intermediate named Histidine-containing phosphotransfer protein (HPt). This multistep phosphorelay consists of a His-Asp-His-Asp sequential transfer of a phosphate group between first a His and an Asp of the HK protein, followed by the transfer to a conserved His of the HPt protein and finally the transfer to an Asp in the receiver domain of the RR protein. In terms of tissue distribution, expressed in roots, leaf blades, leaf sheaths, shoot apex, flowers and panicles.

Its function is as follows. Functions as a response regulator involved in His-to-Asp phosphorelay signal transduction system. Phosphorylation of the Asp residue in the receiver domain activates the ability of the protein to promote the transcription of target genes. Type-A response regulators seem to act as negative regulators of the cytokinin signaling. Involved in adventitious (crown) root initiation under the regulation of CRL5. This chain is Two-component response regulator ORR1, found in Oryza sativa subsp. japonica (Rice).